The primary structure comprises 210 residues: dTTP/UTP pyrophosphatase (210 aa).

D80 (proton acceptor) is an active-site residue.

It belongs to the Maf family. YhdE subfamily. Requires a divalent metal cation as cofactor.

It localises to the cytoplasm. The enzyme catalyses dTTP + H2O = dTMP + diphosphate + H(+). The catalysed reaction is UTP + H2O = UMP + diphosphate + H(+). Nucleoside triphosphate pyrophosphatase that hydrolyzes dTTP and UTP. May have a dual role in cell division arrest and in preventing the incorporation of modified nucleotides into cellular nucleic acids. This is dTTP/UTP pyrophosphatase from Nitratidesulfovibrio vulgaris (strain ATCC 29579 / DSM 644 / CCUG 34227 / NCIMB 8303 / VKM B-1760 / Hildenborough) (Desulfovibrio vulgaris).